Consider the following 340-residue polypeptide: MTIRVGVNGFGRIGRNFYRALATQKAEGKNTDIEIVAVNDLTDNATLAHLLKFDSILGRLPQDVSLEGDDTIVIGDTKIKALEVKEGPAALPWGDLGVDVVVESTGIFTNAAKAKGHLDAGAKKVIISAPATDEDITIVLGVNDDKYDGSQNIISNASCTTNCLGPLAKVLNDEFGIVKGLMTTIHAYTQDQNLQDGPHKDLRRARAAALNIVPTSTGAAKAIGLVLPELKGKLDGYALRVPIPTGSVTDLTAELAKSASVEDINAAMKAAAEGPLKGILKYYDAPIVSSDIVTDPHSSLYDAGLTKVIDNQAKVVSWYDNEWGYSNRLADLVALVGKSL.

NAD(+)-binding positions include 12-13, D40, K85, and S128; that span reads RI. D-glyceraldehyde 3-phosphate contacts are provided by residues 158 to 160, T189, R204, 217 to 218, and R240; these read SCT and TG. The active-site Nucleophile is C159. K257 participates in a covalent cross-link: Isoglutamyl lysine isopeptide (Lys-Gln) (interchain with Q-Cter in protein Pup). Residue N321 coordinates NAD(+).

This sequence belongs to the glyceraldehyde-3-phosphate dehydrogenase family. Homotetramer.

It localises to the cytoplasm. The enzyme catalyses D-glyceraldehyde 3-phosphate + phosphate + NAD(+) = (2R)-3-phospho-glyceroyl phosphate + NADH + H(+). Its pathway is carbohydrate degradation; glycolysis; pyruvate from D-glyceraldehyde 3-phosphate: step 1/5. In terms of biological role, catalyzes the oxidative phosphorylation of glyceraldehyde 3-phosphate (G3P) to 1,3-bisphosphoglycerate (BPG) using the cofactor NAD. The first reaction step involves the formation of a hemiacetal intermediate between G3P and a cysteine residue, and this hemiacetal intermediate is then oxidized to a thioester, with concomitant reduction of NAD to NADH. The reduced NADH is then exchanged with the second NAD, and the thioester is attacked by a nucleophilic inorganic phosphate to produce BPG. The sequence is that of Glyceraldehyde-3-phosphate dehydrogenase (gapA) from Mycolicibacterium smegmatis (strain ATCC 700084 / mc(2)155) (Mycobacterium smegmatis).